A 418-amino-acid polypeptide reads, in one-letter code: 3-isopropylmalate dehydratase large subunit 1 (418 aa).

[4Fe-4S] cluster-binding residues include cysteine 298, cysteine 358, and cysteine 361.

This sequence belongs to the aconitase/IPM isomerase family. LeuC type 2 subfamily. As to quaternary structure, heterodimer of LeuC and LeuD. It depends on [4Fe-4S] cluster as a cofactor.

It catalyses the reaction (2R,3S)-3-isopropylmalate = (2S)-2-isopropylmalate. Its pathway is amino-acid biosynthesis; L-leucine biosynthesis; L-leucine from 3-methyl-2-oxobutanoate: step 2/4. In terms of biological role, catalyzes the isomerization between 2-isopropylmalate and 3-isopropylmalate, via the formation of 2-isopropylmaleate. The sequence is that of 3-isopropylmalate dehydratase large subunit 1 from Methanopyrus kandleri (strain AV19 / DSM 6324 / JCM 9639 / NBRC 100938).